Here is a 371-residue protein sequence, read N- to C-terminus: Chaperone protein DnaJ (371 aa).

The J domain occupies 5-69; the sequence is EFYDRLGVSK…QKRAAYDQYG (65 aa). Residues 127–209 form a CR-type zinc finger; it reads GAEKEVSYNR…CHGTGHEKKT (83 aa). Zn(2+)-binding residues include cysteine 140, cysteine 143, cysteine 157, cysteine 160, cysteine 183, cysteine 186, cysteine 197, and cysteine 200. CXXCXGXG motif repeat units lie at residues 140–147, 157–164, 183–190, and 197–204; these read CHTCSGSG, CQKCHGSG, CDVCQGSG, and CPTCHGTG.

This sequence belongs to the DnaJ family. In terms of assembly, homodimer. Zn(2+) is required as a cofactor.

It localises to the cytoplasm. In terms of biological role, participates actively in the response to hyperosmotic and heat shock by preventing the aggregation of stress-denatured proteins and by disaggregating proteins, also in an autonomous, DnaK-independent fashion. Unfolded proteins bind initially to DnaJ; upon interaction with the DnaJ-bound protein, DnaK hydrolyzes its bound ATP, resulting in the formation of a stable complex. GrpE releases ADP from DnaK; ATP binding to DnaK triggers the release of the substrate protein, thus completing the reaction cycle. Several rounds of ATP-dependent interactions between DnaJ, DnaK and GrpE are required for fully efficient folding. Also involved, together with DnaK and GrpE, in the DNA replication of plasmids through activation of initiation proteins. In Streptococcus agalactiae serotype Ia (strain ATCC 27591 / A909 / CDC SS700), this protein is Chaperone protein DnaJ.